The chain runs to 532 residues: Flavin-containing monooxygenase 3 (532 aa).

FAD-binding positions include 9–13, Glu32, 40–41, and 61–62; these read GAGVS, LW, and NS. NADP(+) contacts are provided by residues 60-61 and 195-198; these read TN and SGCD. A Phosphoserine modification is found at Ser401. A helical membrane pass occupies residues 510–530; it reads FFFHWLKPFAIPILLIAVFLG.

Belongs to the FMO family. FAD serves as cofactor. Liver.

It localises to the microsome membrane. It is found in the endoplasmic reticulum membrane. It catalyses the reaction trimethylamine + NADPH + O2 = trimethylamine N-oxide + NADP(+) + H2O. It carries out the reaction N,N-dimethylaniline + NADPH + O2 + H(+) = N,N-dimethylaniline N-oxide + NADP(+) + H2O. The enzyme catalyses hypotaurine + NADPH + O2 + H(+) = taurine + NADP(+) + H2O. The catalysed reaction is (S)-nicotine + NADPH + O2 = trans-(S)-nicotine N(1')-oxide + NADP(+) + H2O. It catalyses the reaction albendazole + NADPH + O2 + H(+) = albendazole S-oxide + NADP(+) + H2O. Functionally, essential hepatic enzyme that catalyzes the oxygenation of a wide variety of nitrogen- and sulfur-containing compounds including drugs as well as dietary compounds. Plays an important role in the metabolism of trimethylamine (TMA), via the production of trimethylamine N-oxide (TMAO) metabolite. TMA is generated by the action of gut microbiota using dietary precursors such as choline, choline containing compounds, betaine or L-carnitine. By regulating TMAO concentration, FMO3 directly impacts both platelet responsiveness and rate of thrombus formation. This chain is Flavin-containing monooxygenase 3 (FMO3), found in Macaca mulatta (Rhesus macaque).